Here is a 324-residue protein sequence, read N- to C-terminus: Transmembrane protein 171 (324 aa).

Transmembrane regions (helical) follow at residues 22-42 (IFCFFVFGAVLLCVGVLLSIF), 57-77 (MVLKVAGPACAVVGLGAVILA), 113-133 (LIFGFLFLTSGMLISVLGIWV), and 160-180 (FLSLQIMGPLIVLVGLCFFVV). The span at 229 to 239 (PESSASAVAES) shows a compositional bias: low complexity. Disordered regions lie at residues 229–248 (PESSASAVAESPGTNSLLPN) and 279–304 (YTISGTNSSSEASHTPHLPSELPPRY). The span at 279 to 291 (YTISGTNSSSEAS) shows a compositional bias: polar residues.

It localises to the membrane. The polypeptide is Transmembrane protein 171 (TMEM171) (Homo sapiens (Human)).